Reading from the N-terminus, the 164-residue chain is Endoribonuclease YbeY (164 aa).

Residues histidine 130, histidine 134, and histidine 140 each contribute to the Zn(2+) site.

Belongs to the endoribonuclease YbeY family. Zn(2+) is required as a cofactor.

It localises to the cytoplasm. In terms of biological role, single strand-specific metallo-endoribonuclease involved in late-stage 70S ribosome quality control and in maturation of the 3' terminus of the 16S rRNA. The sequence is that of Endoribonuclease YbeY from Streptococcus mutans serotype c (strain ATCC 700610 / UA159).